The primary structure comprises 688 residues: Polyribonucleotide nucleotidyltransferase (688 aa).

Residues Asp484 and Asp490 each contribute to the Mg(2+) site. One can recognise a KH domain in the interval 550-609; sequence PTTEIFNVAPDKIVEIIGQGGRVIKEIVEKFEVKIDLNKPSGEVKIMGNKERVLKTKEFI. Residues 626 to 688 form the S1 motif domain; it reads DEVLEAQVKR…NKGKIALDLA (63 aa).

It belongs to the polyribonucleotide nucleotidyltransferase family. Requires Mg(2+) as cofactor.

It is found in the cytoplasm. It carries out the reaction RNA(n+1) + phosphate = RNA(n) + a ribonucleoside 5'-diphosphate. Functionally, involved in mRNA degradation. Catalyzes the phosphorolysis of single-stranded polyribonucleotides processively in the 3'- to 5'-direction. This is Polyribonucleotide nucleotidyltransferase from Helicobacter pylori (strain ATCC 700392 / 26695) (Campylobacter pylori).